The sequence spans 199 residues: Recombination protein RecR (199 aa).

The segment at 58 to 73 (CSRCFYFTEEDPCPLC) adopts a C4-type zinc-finger fold. One can recognise a Toprim domain in the interval 81–176 (QLICVVEEPQ…KVTRLAHGIP (96 aa)).

The protein belongs to the RecR family.

Its function is as follows. May play a role in DNA repair. It seems to be involved in an RecBC-independent recombinational process of DNA repair. It may act with RecF and RecO. The chain is Recombination protein RecR from Syntrophotalea carbinolica (strain DSM 2380 / NBRC 103641 / GraBd1) (Pelobacter carbinolicus).